The chain runs to 294 residues: Undecaprenyl-diphosphatase (294 aa).

A run of 6 helical transmembrane segments spans residues 39–59 (PGAA…ILYF), 93–113 (ATLG…GFTL), 123–143 (NLWI…VVDA), 198–218 (SFLM…VKAV), 232–252 (PTLV…IGFL), and 268–288 (IGLA…AIDP).

Belongs to the UppP family.

Its subcellular location is the cell membrane. It catalyses the reaction di-trans,octa-cis-undecaprenyl diphosphate + H2O = di-trans,octa-cis-undecaprenyl phosphate + phosphate + H(+). In terms of biological role, catalyzes the dephosphorylation of undecaprenyl diphosphate (UPP). Confers resistance to bacitracin. The protein is Undecaprenyl-diphosphatase of Bifidobacterium longum subsp. infantis (strain ATCC 15697 / DSM 20088 / JCM 1222 / NCTC 11817 / S12).